A 194-amino-acid polypeptide reads, in one-letter code: Putative 3-methyladenine DNA glycosylase (194 aa).

It belongs to the DNA glycosylase MPG family.

The chain is Putative 3-methyladenine DNA glycosylase from Chlamydia felis (strain Fe/C-56) (Chlamydophila felis).